A 94-amino-acid polypeptide reads, in one-letter code: Putative septation protein SpoVG (94 aa).

The protein belongs to the SpoVG family.

Functionally, could be involved in septation. The protein is Putative septation protein SpoVG of Acetivibrio thermocellus (strain ATCC 27405 / DSM 1237 / JCM 9322 / NBRC 103400 / NCIMB 10682 / NRRL B-4536 / VPI 7372) (Clostridium thermocellum).